Here is a 783-residue protein sequence, read N- to C-terminus: Polyadenylate-binding protein, cytoplasmic and nuclear (783 aa).

Positions 16–65 (DLGNTSLGGGDNRAAPAINTNVAPGEYQTADPDTAGPTPSSAAPHPQSSA) are disordered. Positions 54-65 (PSSAAPHPQSSA) are enriched in low complexity. RRM domains follow at residues 65-143 (ASLY…WSQR), 153-230 (GNVF…YHIP), 246-323 (TNIY…RAQK), and 349-471 (VNLY…LAQR). 3 disordered regions span residues 381 to 428 (MRDA…KGDR), 596 to 671 (AAAL…AAGG), and 752 to 783 (VKSQ…EEKA). Residues 396–406 (GKDKENKKEGE) show a composition bias toward basic and acidic residues. Acidic residues predominate over residues 407-416 (QAAEAEGEAE). Residues 417-428 (GAEKKTEKKGDR) are compositionally biased toward basic and acidic residues. The segment covering 601-614 (NGRGGPGGPGGRGM) has biased composition (gly residues). Over residues 630 to 641 (AGFPPNGRPQNG) the composition is skewed to low complexity. The segment covering 642–655 (NMGGRGGPGRGGNF) has biased composition (gly residues). Low complexity predominate over residues 656–671 (AAGRGAPPAGPLAAGG). Residues 676–753 (SSLLQSQLTA…AMAVYDEYVK (78 aa)) enclose the PABC domain. The segment covering 770-783 (EAEKPKEEKAEEKA) has biased composition (basic and acidic residues).

This sequence belongs to the polyadenylate-binding protein type-1 family.

It is found in the cytoplasm. It localises to the nucleus. Its function is as follows. Binds the poly(A) tail of mRNA. Appears to be an important mediator of the multiple roles of the poly(A) tail in mRNA biogenesis, stability and translation. In the nucleus, involved in both mRNA cleavage and polyadenylation. Is also required for efficient mRNA export to the cytoplasm. Acts in concert with a poly(A)-specific nuclease (PAN) to affect poly(A) tail shortening, which may occur concomitantly with either nucleocytoplasmic mRNA transport or translational initiation. In the cytoplasm, stimulates translation initiation and regulates mRNA decay through translation termination-coupled poly(A) shortening, probably mediated by PAN. This is Polyadenylate-binding protein, cytoplasmic and nuclear (PAB1) from Chaetomium globosum (strain ATCC 6205 / CBS 148.51 / DSM 1962 / NBRC 6347 / NRRL 1970) (Soil fungus).